A 575-amino-acid polypeptide reads, in one-letter code: Probable lysosomal cobalamin transporter (575 aa).

5 helical membrane-spanning segments follow: residues 8-28 (LIWVVYAVVVVVLFAVASVFI), 46-66 (IVAITSLLATILLLPVDVALV), 95-115 (LVYYILYSLDILLCLLVVPFV), 144-164 (YTLSFIAILIILFLVGVFVPI), and 188-208 (ALTFALGLLITIGMYVYALHT). A glycan (N-linked (GlcNAc...) asparagine) is linked at N233. The next 4 helical transmembrane spans lie at 314 to 334 (LVGLILLLLVLLIWVSMILTA), 376 to 396 (AIFTMLVLLLFFGTVVGIATV), 420 to 440 (VMTAILMLSILALNYSISMIV), and 504 to 524 (FGAIFFWSQFAFIGVYLLALI). Positions 537–549 (QLDEDAEEAEEEA) are enriched in acidic residues. The segment at 537–556 (QLDEDAEEAEEEALLSGSRR) is disordered.

This sequence belongs to the LIMR family. LMBRD1 subfamily.

The protein localises to the lysosome membrane. Its function is as follows. Probable lysosomal cobalamin transporter. Required to export cobalamin from lysosomes allowing its conversion to cofactors. The chain is Probable lysosomal cobalamin transporter from Emericella nidulans (strain FGSC A4 / ATCC 38163 / CBS 112.46 / NRRL 194 / M139) (Aspergillus nidulans).